Consider the following 511-residue polypeptide: Putative polyol transporter 1 (511 aa).

12 helical membrane passes run 27 to 47, 63 to 83, 94 to 114, 124 to 144, 151 to 171, 186 to 206, 284 to 304, 324 to 344, 351 to 371, 384 to 404, 424 to 444, and 454 to 474; these read FACAILASMTSIILGYDIGVM, VQLEILMGILNIYSLVGSGAA, YTIVLAGAFFFCGALLMGFAT, FVAGIGVGYAMMIAPVYTAEV, GFLTSFPEIFINIGILLGYVS, FMLGVGAVPSVFLAIGVLAMP, ILIACLGIHFAQQASGIDAVV, LATVAVGVVKTLFIVVGTCVV, ALLLTSMGGMFLSLTALGTSL, WAIGLAVTTVMTFVATFSIGA, GASLGVMLNRLMSGIIGMTFL, and GAFLLFAGVAAAAWVFFFTFL.

This sequence belongs to the major facilitator superfamily. Sugar transporter (TC 2.A.1.1) family.

The protein resides in the membrane. Functionally, plasma membrane sugar-proton symporter. This Arabidopsis thaliana (Mouse-ear cress) protein is Putative polyol transporter 1 (PLT1).